Here is a 61-residue protein sequence, read N- to C-terminus: Large ribosomal subunit protein uL30 (61 aa).

Belongs to the universal ribosomal protein uL30 family. Part of the 50S ribosomal subunit.

The protein is Large ribosomal subunit protein uL30 of Saccharophagus degradans (strain 2-40 / ATCC 43961 / DSM 17024).